The following is a 158-amino-acid chain: Protein Smg homolog (158 aa).

This sequence belongs to the Smg family.

The sequence is that of Protein Smg homolog from Vibrio cholerae serotype O1 (strain ATCC 39315 / El Tor Inaba N16961).